Consider the following 107-residue polypeptide: Phosphoribosyl-ATP pyrophosphatase (107 aa).

This sequence belongs to the PRA-PH family.

It localises to the cytoplasm. It catalyses the reaction 1-(5-phospho-beta-D-ribosyl)-ATP + H2O = 1-(5-phospho-beta-D-ribosyl)-5'-AMP + diphosphate + H(+). It functions in the pathway amino-acid biosynthesis; L-histidine biosynthesis; L-histidine from 5-phospho-alpha-D-ribose 1-diphosphate: step 2/9. This is Phosphoribosyl-ATP pyrophosphatase from Bacillus cereus (strain ZK / E33L).